Consider the following 247-residue polypeptide: ATP synthase subunit a, chloroplastic (247 aa).

A run of 5 helical transmembrane segments spans residues 38 to 58, 95 to 115, 134 to 154, 199 to 219, and 220 to 240; these read QVLI…IIAV, VPFI…GALL, INTT…AGLT, LVVV…VMFL, and GLFT…AYIG.

This sequence belongs to the ATPase A chain family. F-type ATPases have 2 components, CF(1) - the catalytic core - and CF(0) - the membrane proton channel. CF(1) has five subunits: alpha(3), beta(3), gamma(1), delta(1), epsilon(1). CF(0) has four main subunits: a, b, b' and c.

It localises to the plastid. It is found in the chloroplast thylakoid membrane. In terms of biological role, key component of the proton channel; it plays a direct role in the translocation of protons across the membrane. The polypeptide is ATP synthase subunit a, chloroplastic (Carica papaya (Papaya)).